The primary structure comprises 364 residues: Cyclin-D3-2 (364 aa).

The disordered stretch occupies residues 331-364; that stretch reads PPGRPIKRGAAAATTADPLPADEESRDAWPPYAA. Positions 340 to 349 are enriched in low complexity; sequence AAAATTADPL.

It belongs to the cyclin family. Cyclin D subfamily.

In Oryza sativa subsp. japonica (Rice), this protein is Cyclin-D3-2 (CYCD3-2).